Here is a 218-residue protein sequence, read N- to C-terminus: Probable transaldolase (218 aa).

Lysine 84 (schiff-base intermediate with substrate) is an active-site residue.

This sequence belongs to the transaldolase family. Type 3B subfamily.

Its subcellular location is the cytoplasm. It catalyses the reaction D-sedoheptulose 7-phosphate + D-glyceraldehyde 3-phosphate = D-erythrose 4-phosphate + beta-D-fructose 6-phosphate. It functions in the pathway carbohydrate degradation; pentose phosphate pathway; D-glyceraldehyde 3-phosphate and beta-D-fructose 6-phosphate from D-ribose 5-phosphate and D-xylulose 5-phosphate (non-oxidative stage): step 2/3. Functionally, transaldolase is important for the balance of metabolites in the pentose-phosphate pathway. The chain is Probable transaldolase from Sulfurihydrogenibium sp. (strain YO3AOP1).